We begin with the raw amino-acid sequence, 82 residues long: RNA-binding protein Hfq (82 aa).

Residues 10 to 70 (DIFLNGARKN…LSTITPSKAI (61 aa)) form the Sm domain.

It belongs to the Hfq family. As to quaternary structure, homohexamer.

In terms of biological role, RNA chaperone that binds small regulatory RNA (sRNAs) and mRNAs to facilitate mRNA translational regulation in response to envelope stress, environmental stress and changes in metabolite concentrations. Also binds with high specificity to tRNAs. This chain is RNA-binding protein Hfq, found in Clostridium kluyveri (strain NBRC 12016).